We begin with the raw amino-acid sequence, 485 residues long: ATP-dependent 6-phosphofructokinase 7 (485 aa).

ATP-binding positions include Gly-101, 164–165 (RG), and 189–192 (GDGT). Asp-190 provides a ligand contact to Mg(2+). Substrate-binding positions include 218 to 220 (TID), 263 to 265 (MGR), Glu-319, and 374 to 377 (YMIR). The Proton acceptor role is filled by Asp-220. Residues 449–485 (SFLGPKDTSEEKKELPETPLLDDGAVDIPPVTKEVTK) are disordered. Basic and acidic residues predominate over residues 455–464 (DTSEEKKELP).

Belongs to the phosphofructokinase type A (PFKA) family. PPi-dependent PFK group II subfamily. Atypical ATP-dependent clade 'X' sub-subfamily. In terms of assembly, homotetramer. Mg(2+) serves as cofactor. Expressed in roots, leaves, stems and flowers.

The protein localises to the cytoplasm. It carries out the reaction beta-D-fructose 6-phosphate + ATP = beta-D-fructose 1,6-bisphosphate + ADP + H(+). It functions in the pathway carbohydrate degradation; glycolysis; D-glyceraldehyde 3-phosphate and glycerone phosphate from D-glucose: step 3/4. Allosterically activated by AMP. Catalyzes the phosphorylation of D-fructose 6-phosphate to fructose 1,6-bisphosphate by ATP, the first committing step of glycolysis. This is ATP-dependent 6-phosphofructokinase 7 from Arabidopsis thaliana (Mouse-ear cress).